A 191-amino-acid polypeptide reads, in one-letter code: Programmed cell death protein 6 (191 aa).

Position 2 is an N-acetylalanine (Ala-2). EF-hand domains lie at Pro-23–Thr-58, Pro-59–Trp-89, Lys-90–Arg-125, Leu-126–Leu-161, and Thr-162–Val-191. Residues Asp-36, Asp-38, Ser-40, Val-42, and Glu-47 each coordinate Ca(2+). Ca(2+) contacts are provided by Asp-103, Asp-105, Ser-107, Met-109, and Glu-114. Residues Asp-169, Asp-171, Asp-173, and Trp-175 each contribute to the Mg(2+) site.

As to quaternary structure, homodimer and heterodimer; heterodimerizes (via the EF-hand 5) with PEF1. Isoform 1 and isoform 2 self-associate; probably forming homodimers. Interacts with CPNE4 (via VWFA domain). Interacts with PDCD6IP; the interaction is calcium-dependent. Interacts with RBM22. Interacts with PLSCR4. Interacts with ANXA7 and TSG101. Interacts with DAPK1. Interacts with SEC31A; the interaction is calcium-dependent and promotes monoubiquitination of SEC31A. Interacts with ANXA11 (via N-terminus); the interaction is calcium-dependent. Interacts with PLSCR3 (via N-terminus); the interaction is calcium-dependent. Interacts with MCOLN1; the interaction is calcium-dependent. Interacts with KDR; the interaction is calcium-dependent. Interacts with HEBP2; the interaction is calcium-dependent. Interacts with TFG. Isoform 1: Interacts with SHISA5, leading to stabilize it. Isoform 2: Does not interact with SHISA5. Isoform 2: Does not interact with PDCD6IP, TSG101, ANXA7 and ANXA11.

It localises to the endoplasmic reticulum membrane. The protein localises to the cytoplasmic vesicle. Its subcellular location is the COPII-coated vesicle membrane. The protein resides in the cytoplasm. It is found in the nucleus. It localises to the endosome. Calcium sensor that plays a key role in processes such as endoplasmic reticulum (ER)-Golgi vesicular transport, endosomal biogenesis or membrane repair. Acts as an adapter that bridges unrelated proteins or stabilizes weak protein-protein complexes in response to calcium: calcium-binding triggers exposure of apolar surface, promoting interaction with different sets of proteins thanks to 3 different hydrophobic pockets, leading to translocation to membranes. Involved in ER-Golgi transport by promoting the association between PDCD6IP and TSG101, thereby bridging together the ESCRT-III and ESCRT-I complexes. Together with PEF1, acts as a calcium-dependent adapter for the BCR(KLHL12) complex, a complex involved in ER-Golgi transport by regulating the size of COPII coats. In response to cytosolic calcium increase, the heterodimer formed with PEF1 interacts with, and bridges together the BCR(KLHL12) complex and SEC31 (SEC31A or SEC31B), promoting monoubiquitination of SEC31 and subsequent collagen export, which is required for neural crest specification. Involved in the regulation of the distribution and function of MCOLN1 in the endosomal pathway. Promotes localization and polymerization of TFG at endoplasmic reticulum exit site. Required for T-cell receptor-, Fas-, and glucocorticoid-induced apoptosis. May mediate Ca(2+)-regulated signals along the death pathway: interaction with DAPK1 can accelerate apoptotic cell death by increasing caspase-3 activity. Its role in apoptosis may however be indirect, as suggested by knockout experiments. May inhibit KDR/VEGFR2-dependent angiogenesis; the function involves inhibition of VEGF-induced phosphorylation of the Akt signaling pathway. In case of infection by HIV-1 virus, indirectly inhibits HIV-1 production by affecting viral Gag expression and distribution. Functionally, has a lower Ca(2+) affinity than isoform 1. In Homo sapiens (Human), this protein is Programmed cell death protein 6 (PDCD6).